The sequence spans 518 residues: WEB family protein At2g40480 (518 aa).

2 coiled-coil regions span residues 95–141 (DIKR…LQQE) and 188–219 (DNLV…AKLT). The disordered stretch occupies residues 303 to 337 (NGESQDDDSEFCFPEPPRSPVTPRGLRIDNDFSTD). Residues 328–337 (LRIDNDFSTD) show a composition bias toward basic and acidic residues. The stretch at 344-375 (ILKKLEEATEGVKQSKQALEAALNRVEIANVK) forms a coiled coil.

Belongs to the WEB family.

In Arabidopsis thaliana (Mouse-ear cress), this protein is WEB family protein At2g40480.